Here is a 338-residue protein sequence, read N- to C-terminus: N-acetyl-gamma-glutamyl-phosphate reductase (338 aa).

Cys148 is an active-site residue.

Belongs to the NAGSA dehydrogenase family. Type 1 subfamily.

The protein resides in the cytoplasm. The enzyme catalyses N-acetyl-L-glutamate 5-semialdehyde + phosphate + NADP(+) = N-acetyl-L-glutamyl 5-phosphate + NADPH + H(+). Its pathway is amino-acid biosynthesis; L-arginine biosynthesis; N(2)-acetyl-L-ornithine from L-glutamate: step 3/4. Its function is as follows. Catalyzes the NADPH-dependent reduction of N-acetyl-5-glutamyl phosphate to yield N-acetyl-L-glutamate 5-semialdehyde. The chain is N-acetyl-gamma-glutamyl-phosphate reductase from Leptospira borgpetersenii serovar Hardjo-bovis (strain JB197).